The chain runs to 228 residues: Phosphoglycolate phosphatase (228 aa).

Asp-9 functions as the Nucleophile in the catalytic mechanism. Residues Asp-9 and Asp-11 each coordinate Mg(2+). Lys-151 is a substrate binding site. Residues Asp-174 and Asp-178 each contribute to the Mg(2+) site.

The protein belongs to the archaeal SPP-like hydrolase family. Requires Mg(2+) as cofactor.

The enzyme catalyses 2-phosphoglycolate + H2O = glycolate + phosphate. Functionally, catalyzes the dephosphorylation of 2-phosphoglycolate. The chain is Phosphoglycolate phosphatase from Pyrobaculum aerophilum (strain ATCC 51768 / DSM 7523 / JCM 9630 / CIP 104966 / NBRC 100827 / IM2).